The chain runs to 239 residues: Increased recombination centers protein 22-2 (239 aa).

The signal sequence occupies residues 1–19 (MKLSTIFTAFAATIATVAG). Residues 20–161 (YETTGSKQTV…AAVSFFDPRL (142 aa)) are Lumenal-facing. A helical membrane pass occupies residues 162–182 (IFLELVLLITFAGLIYVGYEI). Over 183 to 239 (WGKQYFKGVAPVKAKKVSAAKASSPVASGPSTTSATGYDTNWIPESHLKQKKTKKVN) the chain is Cytoplasmic. A compositionally biased stretch (low complexity) spans 201 to 213 (AAKASSPVASGPS). Residues 201-222 (AAKASSPVASGPSTTSATGYDT) are disordered.

Belongs to the IRC22 family.

It is found in the endoplasmic reticulum membrane. Is probably involved in a pathway contributing to genomic integrity. The sequence is that of Increased recombination centers protein 22-2 (IRC22-2) from Candida albicans (strain WO-1) (Yeast).